Consider the following 567-residue polypeptide: GBF-interacting protein 1 (567 aa).

Disordered stretches follow at residues 70 to 150, 164 to 192, and 545 to 567; these read ERKK…PSGI, DKVD…SKES, and PIGP…GNNY. Polar residues-rich tracts occupy residues 91–102 and 121–136; these read FASSYTDASNGR and TASS…TKPS. The span at 182–191 shows a compositional bias: basic and acidic residues; the sequence is DVVEPDKSKE. The span at 550–567 shows a compositional bias: polar residues; the sequence is HVTNQQPQAARTNLGNNY.

The protein belongs to the GIP1 family. Monomer, homodimer, homooligomer. Under non-reducing conditions, predominantly present in high molecular weight forms, but predominates in low molecular weight monomers under reducing conditions. Interacts with BZIP16, BZIP68 and GBF1. Interacts with LBD18. In terms of tissue distribution, expressed in roots, leaves, stems and flowers.

It is found in the nucleus. Functionally, plant specific protein that enhances G-box-binding factor (GBF) DNA binding activity. May function as a nuclear chaperone or lever and regulate the multimeric state of GBFs. May contribute to bZIP-mediated gene regulation. Is able to refold denatured rhodanese in vitro. Reduces DNA-binding activity of BZIP16, BZIP68 and GBF1 under non-reducing conditions through direct physical interaction. Acts as a negative co-regulator in red and blue light-mediated hypocotyl elongation. Functions to promote hypocotyl elongation during the early stages of seedling development by regulating the repression effect by BZIP16 and the activation effect by BZIP68 and GBF1 on LHCB2.4 expression. Enhances transcriptional activity of LBD18 in the EXP14 promoter. May act as a transcriptional coactivator of LBD18. This is GBF-interacting protein 1 from Arabidopsis thaliana (Mouse-ear cress).